We begin with the raw amino-acid sequence, 229 residues long: Large ribosomal subunit protein uL1 (229 aa).

It belongs to the universal ribosomal protein uL1 family. As to quaternary structure, part of the 50S ribosomal subunit.

In terms of biological role, binds directly to 23S rRNA. The L1 stalk is quite mobile in the ribosome, and is involved in E site tRNA release. Functionally, protein L1 is also a translational repressor protein, it controls the translation of the L11 operon by binding to its mRNA. This is Large ribosomal subunit protein uL1 from Histophilus somni (strain 129Pt) (Haemophilus somnus).